A 409-amino-acid chain; its full sequence is Phospho-N-acetylmuramoyl-pentapeptide-transferase (409 aa).

The next 10 helical transmembrane spans lie at 23 to 43 (YITF…TIFG), 73 to 93 (TPTM…LLLA), 95 to 115 (LNNI…AIGF), 132 to 152 (GIFK…TLYF), 214 to 234 (YAWL…SNGA), 247 to 267 (TSAI…NVIF), 279 to 299 (SGEM…FLWY), 305 to 325 (AVFM…VLAI), 331 to 351 (MLIP…VLQV), and 386 to 406 (KIVT…IVTL).

It belongs to the glycosyltransferase 4 family. MraY subfamily. It depends on Mg(2+) as a cofactor.

It is found in the cell inner membrane. It carries out the reaction UDP-N-acetyl-alpha-D-muramoyl-L-alanyl-gamma-D-glutamyl-meso-2,6-diaminopimeloyl-D-alanyl-D-alanine + di-trans,octa-cis-undecaprenyl phosphate = di-trans,octa-cis-undecaprenyl diphospho-N-acetyl-alpha-D-muramoyl-L-alanyl-D-glutamyl-meso-2,6-diaminopimeloyl-D-alanyl-D-alanine + UMP. It functions in the pathway cell wall biogenesis; peptidoglycan biosynthesis. Its function is as follows. Catalyzes the initial step of the lipid cycle reactions in the biosynthesis of the cell wall peptidoglycan: transfers peptidoglycan precursor phospho-MurNAc-pentapeptide from UDP-MurNAc-pentapeptide onto the lipid carrier undecaprenyl phosphate, yielding undecaprenyl-pyrophosphoryl-MurNAc-pentapeptide, known as lipid I. The chain is Phospho-N-acetylmuramoyl-pentapeptide-transferase from Flavobacterium psychrophilum (strain ATCC 49511 / DSM 21280 / CIP 103535 / JIP02/86).